We begin with the raw amino-acid sequence, 235 residues long: Phosphoribosylformylglycinamidine synthase subunit PurQ (235 aa).

Residues 5 to 235 (FGVVVFPGSN…LLNHVSIVAA (231 aa)) enclose the Glutamine amidotransferase type-1 domain. The active-site Nucleophile is Cys88. Residues His205 and Glu207 contribute to the active site.

Part of the FGAM synthase complex composed of 1 PurL, 1 PurQ and 2 PurS subunits.

The protein resides in the cytoplasm. It catalyses the reaction N(2)-formyl-N(1)-(5-phospho-beta-D-ribosyl)glycinamide + L-glutamine + ATP + H2O = 2-formamido-N(1)-(5-O-phospho-beta-D-ribosyl)acetamidine + L-glutamate + ADP + phosphate + H(+). The catalysed reaction is L-glutamine + H2O = L-glutamate + NH4(+). Its pathway is purine metabolism; IMP biosynthesis via de novo pathway; 5-amino-1-(5-phospho-D-ribosyl)imidazole from N(2)-formyl-N(1)-(5-phospho-D-ribosyl)glycinamide: step 1/2. Part of the phosphoribosylformylglycinamidine synthase complex involved in the purines biosynthetic pathway. Catalyzes the ATP-dependent conversion of formylglycinamide ribonucleotide (FGAR) and glutamine to yield formylglycinamidine ribonucleotide (FGAM) and glutamate. The FGAM synthase complex is composed of three subunits. PurQ produces an ammonia molecule by converting glutamine to glutamate. PurL transfers the ammonia molecule to FGAR to form FGAM in an ATP-dependent manner. PurS interacts with PurQ and PurL and is thought to assist in the transfer of the ammonia molecule from PurQ to PurL. In Salinibacter ruber (strain DSM 13855 / M31), this protein is Phosphoribosylformylglycinamidine synthase subunit PurQ.